The following is a 186-amino-acid chain: ATP synthase subunit delta (186 aa).

The protein belongs to the ATPase delta chain family. F-type ATPases have 2 components, F(1) - the catalytic core - and F(0) - the membrane proton channel. F(1) has five subunits: alpha(3), beta(3), gamma(1), delta(1), epsilon(1). CF(0) has four main subunits: a(1), b(1), b'(1) and c(10-14). The alpha and beta chains form an alternating ring which encloses part of the gamma chain. F(1) is attached to F(0) by a central stalk formed by the gamma and epsilon chains, while a peripheral stalk is formed by the delta, b and b' chains.

It is found in the cell inner membrane. In terms of biological role, f(1)F(0) ATP synthase produces ATP from ADP in the presence of a proton or sodium gradient. F-type ATPases consist of two structural domains, F(1) containing the extramembraneous catalytic core and F(0) containing the membrane proton channel, linked together by a central stalk and a peripheral stalk. During catalysis, ATP synthesis in the catalytic domain of F(1) is coupled via a rotary mechanism of the central stalk subunits to proton translocation. This protein is part of the stalk that links CF(0) to CF(1). It either transmits conformational changes from CF(0) to CF(1) or is implicated in proton conduction. The polypeptide is ATP synthase subunit delta (Jannaschia sp. (strain CCS1)).